A 196-amino-acid chain; its full sequence is Transcriptional regulatory protein UhpA (196 aa).

Residues T3–A116 enclose the Response regulatory domain. At D54 the chain carries 4-aspartylphosphate. In terms of domain architecture, HTH luxR-type spans A131 to W196. The H-T-H motif DNA-binding region spans V155 to A174.

In terms of processing, phosphorylated and dephosphorylated by UhpB.

It localises to the cytoplasm. With respect to regulation, phosphorylation by UhpB enhances DNA binding activity. Part of the UhpABC signaling cascade that controls the expression of the hexose phosphate transporter UhpT. Activates the transcription of the uhpT gene. Acts by binding specifically to the uhpT promoter region. This Escherichia coli (strain K12) protein is Transcriptional regulatory protein UhpA (uhpA).